A 129-amino-acid polypeptide reads, in one-letter code: Small ribosomal subunit protein uS11 (129 aa).

Belongs to the universal ribosomal protein uS11 family. Part of the 30S ribosomal subunit. Interacts with proteins S7 and S18. Binds to IF-3.

Functionally, located on the platform of the 30S subunit, it bridges several disparate RNA helices of the 16S rRNA. Forms part of the Shine-Dalgarno cleft in the 70S ribosome. In Rhodopseudomonas palustris (strain BisB5), this protein is Small ribosomal subunit protein uS11.